Reading from the N-terminus, the 69-residue chain is Large ribosomal subunit protein uL29 (69 aa).

Belongs to the universal ribosomal protein uL29 family.

The protein is Large ribosomal subunit protein uL29 of Carboxydothermus hydrogenoformans (strain ATCC BAA-161 / DSM 6008 / Z-2901).